Reading from the N-terminus, the 436-residue chain is 3-ketoacyl-CoA thiolase (436 aa).

Residue Cys99 is the Acyl-thioester intermediate of the active site. Residues His392 and Cys422 each act as proton acceptor in the active site.

The protein belongs to the thiolase-like superfamily. Thiolase family. In terms of assembly, heterotetramer of two alpha chains (FadJ) and two beta chains (FadI).

The protein resides in the cytoplasm. The catalysed reaction is an acyl-CoA + acetyl-CoA = a 3-oxoacyl-CoA + CoA. The protein operates within lipid metabolism; fatty acid beta-oxidation. Functionally, catalyzes the final step of fatty acid oxidation in which acetyl-CoA is released and the CoA ester of a fatty acid two carbons shorter is formed. This is 3-ketoacyl-CoA thiolase from Shewanella amazonensis (strain ATCC BAA-1098 / SB2B).